Reading from the N-terminus, the 377-residue chain is Chaperone protein DnaJ (377 aa).

In terms of domain architecture, J spans 5 to 70 (DYYEVLGVSR…DKKAAYDQFG (66 aa)). The CR-type zinc finger occupies 133 to 211 (GLTKELRIPT…CHGDGRVEKS (79 aa)). Zn(2+) contacts are provided by Cys146, Cys149, Cys163, Cys166, Cys185, Cys188, Cys199, and Cys202. CXXCXGXG motif repeat units follow at residues 146 to 153 (CDLCEGSG), 163 to 170 (CGTCHGQG), 185 to 192 (CPTCHGRG), and 199 to 206 (CSKCHGDG).

The protein belongs to the DnaJ family. Homodimer. Zn(2+) serves as cofactor.

Its subcellular location is the cytoplasm. Functionally, participates actively in the response to hyperosmotic and heat shock by preventing the aggregation of stress-denatured proteins and by disaggregating proteins, also in an autonomous, DnaK-independent fashion. Unfolded proteins bind initially to DnaJ; upon interaction with the DnaJ-bound protein, DnaK hydrolyzes its bound ATP, resulting in the formation of a stable complex. GrpE releases ADP from DnaK; ATP binding to DnaK triggers the release of the substrate protein, thus completing the reaction cycle. Several rounds of ATP-dependent interactions between DnaJ, DnaK and GrpE are required for fully efficient folding. Also involved, together with DnaK and GrpE, in the DNA replication of plasmids through activation of initiation proteins. The polypeptide is Chaperone protein DnaJ (Shewanella baltica (strain OS195)).